The sequence spans 219 residues: PKHD-type hydroxylase AM1_3707 (219 aa).

The Fe2OG dioxygenase domain maps to 78–172 (SIHTLLFSRY…RLVAVGWVQS (95 aa)). Positions 96, 98, and 153 each coordinate Fe cation. Arginine 163 is a 2-oxoglutarate binding site.

It depends on Fe(2+) as a cofactor. L-ascorbate is required as a cofactor.

This is PKHD-type hydroxylase AM1_3707 from Acaryochloris marina (strain MBIC 11017).